The sequence spans 129 residues: Large ribosomal subunit protein uL14m (129 aa).

Belongs to the universal ribosomal protein uL14 family. Component of the mitochondrial ribosome large subunit (39S) which comprises a 16S rRNA and about 50 distinct proteins.

Its subcellular location is the mitochondrion. This is Large ribosomal subunit protein uL14m (mrpl14) from Dictyostelium discoideum (Social amoeba).